We begin with the raw amino-acid sequence, 208 residues long: Outer-membrane lipoprotein carrier protein (208 aa).

The signal sequence occupies residues 1 to 22 (MKKRLCAVLLASPLLFSAAVFA).

This sequence belongs to the LolA family. In terms of assembly, monomer.

It localises to the periplasm. In terms of biological role, participates in the translocation of lipoproteins from the inner membrane to the outer membrane. Only forms a complex with a lipoprotein if the residue after the N-terminal Cys is not an aspartate (The Asp acts as a targeting signal to indicate that the lipoprotein should stay in the inner membrane). This chain is Outer-membrane lipoprotein carrier protein, found in Shewanella baltica (strain OS223).